The chain runs to 219 residues: Probable glucosamine 6-phosphate N-acetyltransferase (219 aa).

An N-acetyltransferase domain is found at 42 to 198 (MKVRPLKDTD…EGPTLKRNAT (157 aa)). Substrate contacts are provided by residues threonine 64, 111–114 (KFIH), and 123–125 (EDV). An acetyl-CoA-binding site is contributed by 133–138 (GKQLGK). Residues 154–155 (YK) and arginine 186 contribute to the substrate site.

This sequence belongs to the acetyltransferase family. GNA1 subfamily.

The catalysed reaction is D-glucosamine 6-phosphate + acetyl-CoA = N-acetyl-D-glucosamine 6-phosphate + CoA + H(+). Its pathway is nucleotide-sugar biosynthesis; UDP-N-acetyl-alpha-D-glucosamine biosynthesis; N-acetyl-alpha-D-glucosamine 1-phosphate from alpha-D-glucosamine 6-phosphate (route I): step 1/2. In Drosophila melanogaster (Fruit fly), this protein is Probable glucosamine 6-phosphate N-acetyltransferase.